The sequence spans 254 residues: MASDLEQLCSHINEKIGNIKRTLSLRNCGQEPTLKTILNKIGDEIIVVNELLNKLELEIQYQEQTNSSLKELFESLEEDYKDVEHLKENIPPHLPQVTVTQNFVNGSDLDPEEPVKVEEPAPTKKPPKEQRSIKEMPFITSDEFNGIPAYMKSRLTYCHINDVIKEINKAVVSKYKILHQPKKSMSSVARNLYHRFIDEETKETKGHYFVVEADIKEFTTLKVDKRFHGILNILRHCRRLSEVRGKGLTRYVIT.

Residues 49–90 adopt a coiled-coil conformation; the sequence is NELLNKLELEIQYQEQTNSSLKELFESLEEDYKDVEHLKENI. Positions 91–131 are flexiple loop that anchors MAPRE1; sequence PPHLPQVTVTQNFVNGSDLDPEEPVKVEEPAPTKKPPKEQR. The Slightly degenerated SXLP motif; may mediate interaction with MAPRE1, targeting to microtubule plus ends, stabilization on kinetochores and is required for proper chromosome alignment to the metaphase plate signature appears at 92-95; it reads PHLP. Residues 105 to 131 form a disordered region; the sequence is NGSDLDPEEPVKVEEPAPTKKPPKEQR. Residues 113–131 are compositionally biased toward basic and acidic residues; that stretch reads EPVKVEEPAPTKKPPKEQR. The interval 131 to 254 is binds microtubules and protein phosphatase PP1 subunit PPP1CA; sequence RSIKEMPFIT…GKGLTRYVIT (124 aa). A Phosphothreonine modification is found at Thr-156. At Ser-241 the chain carries Phosphoserine.

It belongs to the SKA1 family. As to quaternary structure, component of the SKA complex, composed of SKA1, SKA2 and SKA3. The SKA complex is a homodimer organized around a central W-shaped coiled-coil structure, formed by the interacting domains of SKA1, SKA2, and SKA3, each end of the 'W' is extended further by the C-terminal microtubule-binding domains of SKA1 and SKA3; the complex forms extended structures on microtubules. Interacts (via SXLP motif) with MAPRE1 (via C-terminus); the interaction is direct and stabilizes the kinetochore-microtubule attachment of the SKA1 complex. Interacts (via C-terminus) with protein phosphatase PP1 subunit PPP1CA; the interaction is direct and required for recruitment of PPP1CA to the kinetochore. Interacts with the NDC80 complex; the interaction is required to establish kinetochore-microtubule end-on attachments.

Its subcellular location is the cytoplasm. It localises to the cytoskeleton. The protein resides in the spindle. It is found in the chromosome. The protein localises to the centromere. Its subcellular location is the kinetochore. It localises to the microtubule organizing center. The protein resides in the centrosome. Component of the SKA complex, a microtubule plus end-binding complex of the outer kinetochore that stabilizes spindle microtubule-kinetochore attachments, promotes alignment of chromosomes at the mitotic spindle equator (chromosome congression) and assists suppression of the spindle assembly checkpoint. Kinetochores, consisting of a centromere-associated inner segment and a microtubule-contacting outer segment, play a crucial role in chromosome segregation by mediating the physical connection between centromeric DNA and spindle microtubules. The outer kinetochore is made up of the ten-subunit KMN network complex, comprising the MIS12, NDC80 and KNL1 complexes, and auxiliary microtubule-associated components such as the SKA complex; together they connect the outer kinetochore with the inner kinetochore, bind microtubules, and mediate interactions with mitotic checkpoint proteins that delay anaphase until chromosomes are bioriented on the spindle. The SKA complex is loaded onto bioriented kinetochores and it facilitates chromosome congression by stabilizing microtubules together with MAPRE1, and end-on attachment of the NDC80 complex to depolymerizing spindle microtubules, thereby assisting the poleward-moving kinetochore in withstanding microtubule pulling forces. The complex associates with dynamic microtubule plus-ends and can track both depolymerizing and elongating microtubules. The complex recruits protein phosphatase 1 (PP1) to the kinetochore in prometaphase and metaphase, to oppose spindle assembly checkpoint signaling and promote the onset of anaphase. In the complex, it mediates interactions with microtubules. It also stimulates AURKB/Aurora B catalytic activity. During meiosis the SKA complex stabilizes the meiotic spindle and is required for its migration to the cortex. The polypeptide is SKA complex subunit 1 (SKA1) (Bos taurus (Bovine)).